The primary structure comprises 737 residues: O-GlcNAcase BT_4395 (737 aa).

The first 21 residues, 1 to 21, serve as a signal peptide directing secretion; that stretch reads MKNNKIYLLGACLLCAVTTFA. The interval 148-433 is catalytic domain; the sequence is VRYRGVVEGF…WKDAIRTILP (286 aa). Positions 149-416 constitute a GH84 domain; the sequence is RYRGVVEGFY…SVASYAWNPA (268 aa). Residues glycine 156, lysine 187, and aspartate 263 each contribute to the a protein site. The Proton donor role is filled by aspartate 264. A protein contacts are provided by residues tyrosine 303, 358 to 360, aspartate 365, and asparagine 393; that span reads WWN.

Belongs to the glycosyl hydrolase 84 family. In terms of assembly, homodimer.

The catalysed reaction is 3-O-(N-acetyl-beta-D-glucosaminyl)-L-seryl-[protein] + H2O = N-acetyl-D-glucosamine + L-seryl-[protein]. It carries out the reaction 3-O-(N-acetyl-beta-D-glucosaminyl)-L-threonyl-[protein] + H2O = L-threonyl-[protein] + N-acetyl-D-glucosamine. Inhibited by 1,2-dideoxy-2'-methyl-alpha-D-glucopyranoso-[2,1-d]-delta 2'-thiazoline (NAG-thiazoline) and O-(2-acetamido-2-deoxy-D-glucopyranosylidene)amino-N-phenyl-carbamate (PUGNAc). Not inhibited by Streptozotocin. Functionally, can hydrolyze the glycosidic link of O-GlcNAcylated proteins. Can use p-nitrophenyl-beta-GlcNAc and 4-methylumbelliferone-GlcNAc as substrates (in vitro). This is O-GlcNAcase BT_4395 from Bacteroides thetaiotaomicron (strain ATCC 29148 / DSM 2079 / JCM 5827 / CCUG 10774 / NCTC 10582 / VPI-5482 / E50).